We begin with the raw amino-acid sequence, 378 residues long: Chaperone protein DnaJ (378 aa).

In terms of domain architecture, J spans Glu-5–Gly-69. The CR-type zinc-finger motif lies at Gly-134–Ala-216. 8 residues coordinate Zn(2+): Cys-147, Cys-150, Cys-164, Cys-167, Cys-190, Cys-193, Cys-204, and Cys-207. CXXCXGXG motif repeat units lie at residues Cys-147–Gly-154, Cys-164–Gly-171, Cys-190–Gly-197, and Cys-204–Gly-211.

This sequence belongs to the DnaJ family. As to quaternary structure, homodimer. It depends on Zn(2+) as a cofactor.

It localises to the cytoplasm. Participates actively in the response to hyperosmotic and heat shock by preventing the aggregation of stress-denatured proteins and by disaggregating proteins, also in an autonomous, DnaK-independent fashion. Unfolded proteins bind initially to DnaJ; upon interaction with the DnaJ-bound protein, DnaK hydrolyzes its bound ATP, resulting in the formation of a stable complex. GrpE releases ADP from DnaK; ATP binding to DnaK triggers the release of the substrate protein, thus completing the reaction cycle. Several rounds of ATP-dependent interactions between DnaJ, DnaK and GrpE are required for fully efficient folding. Also involved, together with DnaK and GrpE, in the DNA replication of plasmids through activation of initiation proteins. This is Chaperone protein DnaJ from Streptococcus pyogenes serotype M1.